We begin with the raw amino-acid sequence, 96 residues long: MGLAFSGARPCCCRHNVITTDGGEVVSLTAHEFDVVDIESEEEGNFYVPPDVRVVTRAPGPQYRRPSDPPSRHTRRRDPDVARPPATLTPPLSDSE.

Gly2 carries the N-myristoyl glycine; by host lipid modification. The interval 37–43 (DIESEEE) is asp/Glu-rich (acidic). Position 40 is a phosphoserine (Ser40). The disordered stretch occupies residues 50–96 (PDVRVVTRAPGPQYRRPSDPPSRHTRRRDPDVARPPATLTPPLSDSE). A compositionally biased stretch (basic and acidic residues) spans 65 to 81 (RPSDPPSRHTRRRDPDV).

It belongs to the herpesviridae cytoplasmic envelopment protein 3 family. As to quaternary structure, interacts with cytoplasmic envelopment protein 2; this interaction is essential for the proper localization of each protein to the assembly complex and thus for the production of infectious virus. Interacts with gE (via C-terminus). Interacts with gD (via C-terminus). Interacts with UL56. Post-translationally, myristoylation and palmitoylation (probably on one or more of the nearby cysteines at the N-terminus) enable membrane-binding and Golgi apparatus-specific targeting and are essential for efficient packaging. In terms of processing, phosphorylated. Phosphorylation does not seem to be required for recycling to the host Golgi apparatus. Packaging is selective for underphosphorylated forms.

It is found in the virion tegument. The protein localises to the virion membrane. The protein resides in the host cell membrane. Its subcellular location is the host Golgi apparatus membrane. In terms of biological role, plays an important role in the cytoplasmic envelopment of tegument proteins and capsids during the assembly and egress processes. Also participates in viral entry at the fusion step probably by regulating the core fusion machinery. This Homo sapiens (Human) protein is Cytoplasmic envelopment protein 3.